The following is a 312-amino-acid chain: Protein dif-1 (312 aa).

Solcar repeat units follow at residues 2–93 (SDVL…GKWL), 102–193 (MTFI…LKKK), and 203–289 (LSPG…TLAA). 6 consecutive transmembrane segments (helical) span residues 5–25 (LLNF…GHPF), 69–89 (MAAP…GCAV), 104–124 (FIQN…VMVP), 172–192 (TLLR…YLKK), 209–229 (LMAG…ADVL), and 261–282 (LFKG…CFFG).

This sequence belongs to the mitochondrial carrier (TC 2.A.29) family.

The protein resides in the mitochondrion inner membrane. Seems to play a role in the maintenance of tissue differentiation in the developing embryo, but not for its initiation. This chain is Protein dif-1 (dif-1), found in Caenorhabditis elegans.